The sequence spans 211 residues: Ferric nitrobindin-like protein (211 aa).

Residues 21–27 carry the GXWXGXG motif; it reads GRWRGPG. The tract at residues 104–130 is disordered; the sequence is GVVQEGSDTRTEPGGAEPDPAGRRAPS.

This sequence belongs to the nitrobindin family.

This chain is Ferric nitrobindin-like protein, found in Beutenbergia cavernae (strain ATCC BAA-8 / DSM 12333 / CCUG 43141 / JCM 11478 / NBRC 16432 / NCIMB 13614 / HKI 0122).